A 716-amino-acid chain; its full sequence is Calpain clp-4 (716 aa).

A disordered region spans residues 31 to 53 (DDDDKQEAPVAVSKAPKGKGSNH). Positions 240–536 (LFEDPEFPAT…FTQMEVCNLT (297 aa)) constitute a Calpain catalytic domain. Residues C295, H452, and N476 contribute to the active site.

Belongs to the peptidase C2 family.

In terms of biological role, calcium-regulated non-lysosomal thiol-protease which catalyzes limited proteolysis of substrates. Promotes starvation-induced muscle atrophy. This Caenorhabditis elegans protein is Calpain clp-4.